The chain runs to 811 residues: Ent-13-epi-manoyl oxide synthase KSL2, chloroplastic (811 aa).

Residues M1–C49 constitute a chloroplast transit peptide. 4 residues coordinate Mg(2+): D550, D554, N694, and E702. The short motif at D550–D554 is the DDXXD motif element.

Belongs to the terpene synthase family. Mg(2+) serves as cofactor.

The protein resides in the plastid. Its subcellular location is the chloroplast. It carries out the reaction ent-8alpha-hydroxylabd-13-en-15-yl diphosphate = ent-13-epi-manoyl oxide + diphosphate. The protein operates within secondary metabolite biosynthesis; terpenoid biosynthesis. Involved in diterpenoid biosynthesis. Catalyzes the conversion of ent-8alpha-hydroxylabd-13-en-15-yl diphosphate to ent-13-epi-manoyl oxide. This is Ent-13-epi-manoyl oxide synthase KSL2, chloroplastic from Salvia miltiorrhiza (Chinese sage).